The sequence spans 60 residues: Large ribosomal subunit protein bL32 (60 aa).

Residues 1-23 are disordered; it reads MAVPARHTSKAKKNKRRTHYKLT. Residues 7-20 are compositionally biased toward basic residues; that stretch reads HTSKAKKNKRRTHY.

The protein belongs to the bacterial ribosomal protein bL32 family.

In Streptococcus equi subsp. equi (strain 4047), this protein is Large ribosomal subunit protein bL32.